A 341-amino-acid chain; its full sequence is Anthranilate phosphoribosyltransferase (341 aa).

5-phospho-alpha-D-ribose 1-diphosphate contacts are provided by residues G85, 88–89, T93, 95–98, 113–121, and S125; these read GD, NIST, and KHGNRSASG. G85 provides a ligand contact to anthranilate. S97 provides a ligand contact to Mg(2+). An anthranilate-binding site is contributed by N116. Anthranilate is bound at residue R171. Residues D230 and E231 each contribute to the Mg(2+) site.

It belongs to the anthranilate phosphoribosyltransferase family. Homodimer. The cofactor is Mg(2+).

It carries out the reaction N-(5-phospho-beta-D-ribosyl)anthranilate + diphosphate = 5-phospho-alpha-D-ribose 1-diphosphate + anthranilate. It participates in amino-acid biosynthesis; L-tryptophan biosynthesis; L-tryptophan from chorismate: step 2/5. Catalyzes the transfer of the phosphoribosyl group of 5-phosphorylribose-1-pyrophosphate (PRPP) to anthranilate to yield N-(5'-phosphoribosyl)-anthranilate (PRA). This Prochlorococcus marinus (strain SARG / CCMP1375 / SS120) protein is Anthranilate phosphoribosyltransferase.